The sequence spans 142 residues: Small ribosomal subunit protein uS12 (142 aa).

It belongs to the universal ribosomal protein uS12 family. As to quaternary structure, part of the 30S ribosomal subunit.

With S4 and S5 plays an important role in translational accuracy. Located at the interface of the 30S and 50S subunits. In Thermoplasma volcanium (strain ATCC 51530 / DSM 4299 / JCM 9571 / NBRC 15438 / GSS1), this protein is Small ribosomal subunit protein uS12.